Reading from the N-terminus, the 180-residue chain is Large ribosomal subunit protein uL6 (180 aa).

It belongs to the universal ribosomal protein uL6 family. As to quaternary structure, part of the 50S ribosomal subunit.

Its function is as follows. This protein binds to the 23S rRNA, and is important in its secondary structure. It is located near the subunit interface in the base of the L7/L12 stalk, and near the tRNA binding site of the peptidyltransferase center. The protein is Large ribosomal subunit protein uL6 of Thermus aquaticus.